A 95-amino-acid polypeptide reads, in one-letter code: Aspartyl/glutamyl-tRNA(Asn/Gln) amidotransferase subunit C (95 aa).

This sequence belongs to the GatC family. Heterotrimer of A, B and C subunits.

The enzyme catalyses L-glutamyl-tRNA(Gln) + L-glutamine + ATP + H2O = L-glutaminyl-tRNA(Gln) + L-glutamate + ADP + phosphate + H(+). The catalysed reaction is L-aspartyl-tRNA(Asn) + L-glutamine + ATP + H2O = L-asparaginyl-tRNA(Asn) + L-glutamate + ADP + phosphate + 2 H(+). Its function is as follows. Allows the formation of correctly charged Asn-tRNA(Asn) or Gln-tRNA(Gln) through the transamidation of misacylated Asp-tRNA(Asn) or Glu-tRNA(Gln) in organisms which lack either or both of asparaginyl-tRNA or glutaminyl-tRNA synthetases. The reaction takes place in the presence of glutamine and ATP through an activated phospho-Asp-tRNA(Asn) or phospho-Glu-tRNA(Gln). This chain is Aspartyl/glutamyl-tRNA(Asn/Gln) amidotransferase subunit C, found in Jannaschia sp. (strain CCS1).